Consider the following 213-residue polypeptide: Thymidylate kinase (213 aa).

10 to 17 contacts ATP; that stretch reads GPDGAGKT.

The protein belongs to the thymidylate kinase family.

It catalyses the reaction dTMP + ATP = dTDP + ADP. In terms of biological role, phosphorylation of dTMP to form dTDP in both de novo and salvage pathways of dTTP synthesis. The polypeptide is Thymidylate kinase (Limosilactobacillus reuteri (strain DSM 20016) (Lactobacillus reuteri)).